The sequence spans 251 residues: 2-amino-5-chloromuconate deaminase (251 aa).

Monomer.

It carries out the reaction (2Z,4E)-2-aminomuconate + H2O = (2Z,4E)-2-hydroxyhexa-2,4-dienedioate + NH4(+). It participates in xenobiotic degradation; 4-chloronitrobenzene degradation. Its pathway is xenobiotic degradation; nitrobenzene degradation. Cysteine residue modifying agents such as p-chloromercuribenzoate and the SH-binding metals Zn(2+), Ni(2+) and Cu(2+) completely inhibit deaminase activity, whereas Ca(2+), Mg(2+) and the histidine residue-modifying agent diethyl pyrocarbonate inhibit the activity by 23 to 50%. Involved in the biodegradation of xenobiotic compounds, such as nitrobenzene and 4-chloronitrobenzene (4-CNB). CnbZ preferentially catalyzes the deamination of 2-amino-5-chloromuconate (2A5CM) to yield 2-hydroxy-5-chloromuconate (2H5CM). Also able to catalyze the deamination of 2-aminomuconate to yield 2-hydroxymuconate, which spontaneously converts into its keto form, 2-oxalocrotonate. In Comamonas testosteroni (Pseudomonas testosteroni), this protein is 2-amino-5-chloromuconate deaminase.